We begin with the raw amino-acid sequence, 181 residues long: Organ-specific protein S2 (181 aa).

4 repeat units span residues 59 to 84 (HAKE…DNEI), 85 to 110 (HAKE…DNEI), 111 to 136 (HANE…DNEI), and 137 to 162 (HANE…DNEI). The 4 X 26 AA tandem repeats stretch occupies residues 59 to 162 (HAKENMGAIG…NASAYGDNEI (104 aa)). The disordered stretch occupies residues 94–181 (GEFEPRPNAS…PRPSMTKYNA (88 aa)).

It to organ specific protein P4. In terms of tissue distribution, expressed in stems.

The chain is Organ-specific protein S2 from Pisum sativum (Garden pea).